The chain runs to 310 residues: Hydroxyacylglutathione hydrolase, mitochondrial (310 aa).

Positions 104, 106, 108, 109, 160, and 184 each coordinate Zn(2+). Substrate-binding positions include 193–195 (KFF), 223–225 (HEY), and 299–302 (RKEK). Residue histidine 223 participates in Zn(2+) binding.

This sequence belongs to the metallo-beta-lactamase superfamily. Glyoxalase II family. Monomer. Zn(2+) is required as a cofactor.

Its subcellular location is the mitochondrion matrix. It localises to the cytoplasm. The catalysed reaction is an S-(2-hydroxyacyl)glutathione + H2O = a 2-hydroxy carboxylate + glutathione + H(+). The enzyme catalyses (R)-S-lactoylglutathione + H2O = (R)-lactate + glutathione + H(+). In terms of biological role, thiolesterase that catalyzes the hydrolysis of S-D-lactoyl-glutathione to form glutathione and D-lactic acid. The sequence is that of Hydroxyacylglutathione hydrolase, mitochondrial (HAGH) from Gallus gallus (Chicken).